The following is a 177-amino-acid chain: Large ribosomal subunit protein uL22 (177 aa).

The disordered stretch occupies residues 118 to 177; that stretch reads VESRPSREGRRGGAGESAGGARARRAQGSKAAAAKKAPASSSTKAATTTEASEEAKGGSQ. Residues 121 to 130 are compositionally biased toward basic and acidic residues; that stretch reads RPSREGRRGG. The segment covering 145 to 167 has biased composition (low complexity); sequence GSKAAAAKKAPASSSTKAATTTE.

This sequence belongs to the universal ribosomal protein uL22 family. In terms of assembly, part of the 50S ribosomal subunit.

Functionally, this protein binds specifically to 23S rRNA; its binding is stimulated by other ribosomal proteins, e.g. L4, L17, and L20. It is important during the early stages of 50S assembly. It makes multiple contacts with different domains of the 23S rRNA in the assembled 50S subunit and ribosome. Its function is as follows. The globular domain of the protein is located near the polypeptide exit tunnel on the outside of the subunit, while an extended beta-hairpin is found that lines the wall of the exit tunnel in the center of the 70S ribosome. In Mycobacterium sp. (strain JLS), this protein is Large ribosomal subunit protein uL22.